Here is a 398-residue protein sequence, read N- to C-terminus: Dual-specificity RNA methyltransferase RlmN (398 aa).

The active-site Proton acceptor is the glutamate 119. The 240-residue stretch at 125 to 364 folds into the Radical SAM core domain; that stretch reads EADRATLCVS…TIVRKTRGDD (240 aa). An intrachain disulfide couples cysteine 132 to cysteine 369. The [4Fe-4S] cluster site is built by cysteine 139, cysteine 143, and cysteine 146. Residues 193–194, serine 225, 247–249, and asparagine 326 contribute to the S-adenosyl-L-methionine site; these read GE and SLH. The S-methylcysteine intermediate role is filled by cysteine 369.

This sequence belongs to the radical SAM superfamily. RlmN family. It depends on [4Fe-4S] cluster as a cofactor.

Its subcellular location is the cytoplasm. The enzyme catalyses adenosine(2503) in 23S rRNA + 2 reduced [2Fe-2S]-[ferredoxin] + 2 S-adenosyl-L-methionine = 2-methyladenosine(2503) in 23S rRNA + 5'-deoxyadenosine + L-methionine + 2 oxidized [2Fe-2S]-[ferredoxin] + S-adenosyl-L-homocysteine. The catalysed reaction is adenosine(37) in tRNA + 2 reduced [2Fe-2S]-[ferredoxin] + 2 S-adenosyl-L-methionine = 2-methyladenosine(37) in tRNA + 5'-deoxyadenosine + L-methionine + 2 oxidized [2Fe-2S]-[ferredoxin] + S-adenosyl-L-homocysteine. Specifically methylates position 2 of adenine 2503 in 23S rRNA and position 2 of adenine 37 in tRNAs. m2A2503 modification seems to play a crucial role in the proofreading step occurring at the peptidyl transferase center and thus would serve to optimize ribosomal fidelity. In Yersinia pestis, this protein is Dual-specificity RNA methyltransferase RlmN.